The following is a 357-amino-acid chain: Alkanal monooxygenase alpha chain (357 aa).

The protein belongs to the bacterial luciferase oxidoreductase family. In terms of assembly, heterodimer of an alpha and a beta chain.

It carries out the reaction a long-chain fatty aldehyde + FMNH2 + O2 = a long-chain fatty acid + hnu + FMN + H2O + 2 H(+). Its function is as follows. Light-emitting reaction in luminous bacteria. The sequence is that of Alkanal monooxygenase alpha chain (luxA) from Kryptophanaron alfredi symbiont.